Here is a 140-residue protein sequence, read N- to C-terminus: Transmembrane protein 107 (140 aa).

Transmembrane regions (helical) follow at residues 7 to 27 and 53 to 73; these read LVPS…TLFW and LVAA…GFLS. Asn79 carries N-linked (GlcNAc...) asparagine glycosylation. 2 consecutive transmembrane segments (helical) span residues 83 to 103 and 113 to 133; these read SLIS…FIFE and IFVF…VTVF.

In terms of assembly, part of the tectonic-like complex (also named B9 complex). Interacts with TMEM237, TMEM231, MKS1 and TMEM216.

It is found in the membrane. The protein resides in the cell projection. Its subcellular location is the cilium. In terms of biological role, plays a role in cilia formation and embryonic patterning. Requires for normal Sonic hedgehog (Shh) signaling in the neural tube and acts in combination with GLI2 and GLI3 to pattern ventral and intermediate neuronal cell types. During ciliogenesis regulates the ciliary transition zone localization of some MKS complex proteins. The sequence is that of Transmembrane protein 107 from Homo sapiens (Human).